We begin with the raw amino-acid sequence, 420 residues long: Histidine--tRNA ligase, chloroplastic (420 aa).

It belongs to the class-II aminoacyl-tRNA synthetase family.

Its subcellular location is the plastid. The protein resides in the chloroplast. The catalysed reaction is tRNA(His) + L-histidine + ATP = L-histidyl-tRNA(His) + AMP + diphosphate + H(+). The polypeptide is Histidine--tRNA ligase, chloroplastic (Gracilaria tenuistipitata var. liui (Red alga)).